We begin with the raw amino-acid sequence, 811 residues long: N-terminal acetyltransferase B complex subunit arm1 (811 aa).

The protein belongs to the MDM20/NAA25 family. Component of the N-terminal acetyltransferase B (NatB) complex.

It localises to the cytoplasm. Non-catalytic subunit of the NatB N-terminal acetyltransferase, which catalyzes acetylation of the amino-terminal methionine residues of all proteins beginning with Met-Asp or Met-Glu and of some proteins beginning with Met-Asn or Met-Met. This is N-terminal acetyltransferase B complex subunit arm1 (arm1) from Schizosaccharomyces pombe (strain 972 / ATCC 24843) (Fission yeast).